The primary structure comprises 170 residues: Probable phospholipid hydroperoxide glutathione peroxidase (170 aa).

Residue cysteine 44 is part of the active site.

Belongs to the glutathione peroxidase family.

It is found in the cytoplasm. It catalyses the reaction a hydroperoxy polyunsaturated fatty acid + 2 glutathione = a hydroxy polyunsaturated fatty acid + glutathione disulfide + H2O. Protects cells and enzymes from oxidative damage, by catalyzing the reduction of hydrogen peroxide, lipid peroxides and organic hydroperoxide, by glutathione. The protein is Probable phospholipid hydroperoxide glutathione peroxidase (GPXMC1) of Mesembryanthemum crystallinum (Common ice plant).